We begin with the raw amino-acid sequence, 158 residues long: Endoribonuclease YbeY (158 aa).

3 residues coordinate Zn(2+): His-121, His-125, and His-131.

This sequence belongs to the endoribonuclease YbeY family. Requires Zn(2+) as cofactor.

Its subcellular location is the cytoplasm. Functionally, single strand-specific metallo-endoribonuclease involved in late-stage 70S ribosome quality control and in maturation of the 3' terminus of the 16S rRNA. The protein is Endoribonuclease YbeY of Exiguobacterium sibiricum (strain DSM 17290 / CCUG 55495 / CIP 109462 / JCM 13490 / 255-15).